A 315-amino-acid polypeptide reads, in one-letter code: Microtubule-associated protein Jupiter (315 aa).

Residues 1–14 (MISNFDCTDNQASS) are compositionally biased toward polar residues. Disordered regions lie at residues 1–37 (MISNFDCTDNQASSKVLRPPGGGSSDIFGSEMPQTPR) and 51–89 (EKDNGVKNNGDAPRRGQKTVDSHSRLFGEPTRPITPGKN). The residue at position 24 (S24) is a Phosphoserine. T35 is subject to Phosphothreonine. Basic and acidic residues predominate over residues 62–76 (APRRGQKTVDSHSRL). Phosphothreonine occurs at positions 81 and 85. A phosphoserine mark is found at S94, S122, and S133. 2 disordered regions span residues 116–166 (YNGK…ADDA) and 272–315 (EGNP…SGLW). The segment covering 120-133 (SGSVSSASSSVSSS) has biased composition (low complexity). 2 stretches are compositionally biased toward polar residues: residues 134–148 (TENLKMNSGSRSVFR) and 285–296 (DFTQRQESSNGG).

Belongs to the MAP Jupiter family.

Its subcellular location is the nucleus. It localises to the cytoplasm. It is found in the cytoskeleton. The protein localises to the spindle. Binds to all microtubule populations. This chain is Microtubule-associated protein Jupiter, found in Drosophila sechellia (Fruit fly).